The sequence spans 318 residues: Sol locus transcriptional repressor (318 aa).

TPR repeat units lie at residues 65-98, 99-132, 133-166, and 167-199; these read ANAY…RPKT, INDV…QPNV, GISY…GSTN, and SVYR…EPEK.

Its function is as follows. Transcriptional repressor of the sol locus (adhE/aad, ctfA, ctfB and adc) genes for butanol and acetone formation. The sequence is that of Sol locus transcriptional repressor (solR) from Clostridium acetobutylicum (strain ATCC 824 / DSM 792 / JCM 1419 / IAM 19013 / LMG 5710 / NBRC 13948 / NRRL B-527 / VKM B-1787 / 2291 / W).